Reading from the N-terminus, the 319-residue chain is Solute carrier family 25 member 34 (319 aa).

A disordered region spans residues 1–22; that stretch reads MNSAFSGPSSPTPGPSPPRPPL. The span at 10 to 22 shows a compositional bias: pro residues; the sequence is SPTPGPSPPRPPL. 3 Solcar repeats span residues 22-115, 119-212, and 222-313; these read LWPP…MQAA, DGPC…AKDW, and LSSL…LRQR. 6 consecutive transmembrane segments (helical) span residues 25–45, 63–83, 116–138, 188–209, 224–244, and 296–319; these read PLDF…TNPL, SYRR…RTDG, GVTD…GAFI, VNGA…FSSA, SLNT…IMTP, and LAPH…PYTH.

This sequence belongs to the mitochondrial carrier (TC 2.A.29) family.

Its subcellular location is the mitochondrion inner membrane. This chain is Solute carrier family 25 member 34 (slc25a34), found in Danio rerio (Zebrafish).